The primary structure comprises 205 residues: Mediator of RNA polymerase II transcription subunit 29 (205 aa).

Positions 1-27 are enriched in low complexity; the sequence is MNPNMNMMQMSGPPMMQVSPMMQSSPQ. Residues 1-65 form a disordered region; the sequence is MNPNMNMMQM…QQQQQQAEKL (65 aa). The span at 28–38 shows a compositional bias: pro residues; the sequence is PMMPTGPPGPV. Over residues 39–61 the composition is skewed to low complexity; the sequence is PMQQQHQQQQQQQQQQQQQQQQQ.

The protein belongs to the Mediator complex subunit 29 family. As to quaternary structure, component of the Mediator complex.

It is found in the nucleus. In terms of biological role, component of the Mediator complex, a coactivator involved in the regulated transcription of nearly all RNA polymerase II-dependent genes. Mediator functions as a bridge to convey information from gene-specific regulatory proteins to the basal RNA polymerase II transcription machinery. Mediator is recruited to promoters by direct interactions with regulatory proteins and serves as a scaffold for the assembly of a functional preinitiation complex with RNA polymerase II and the general transcription factors. This chain is Mediator of RNA polymerase II transcription subunit 29 (ix), found in Drosophila virilis (Fruit fly).